A 197-amino-acid polypeptide reads, in one-letter code: NADH-quinone oxidoreductase subunit C (197 aa).

Belongs to the complex I 30 kDa subunit family. As to quaternary structure, NDH-1 is composed of 14 different subunits. Subunits NuoB, C, D, E, F, and G constitute the peripheral sector of the complex.

The protein localises to the cell inner membrane. The catalysed reaction is a quinone + NADH + 5 H(+)(in) = a quinol + NAD(+) + 4 H(+)(out). Functionally, NDH-1 shuttles electrons from NADH, via FMN and iron-sulfur (Fe-S) centers, to quinones in the respiratory chain. The immediate electron acceptor for the enzyme in this species is believed to be ubiquinone. Couples the redox reaction to proton translocation (for every two electrons transferred, four hydrogen ions are translocated across the cytoplasmic membrane), and thus conserves the redox energy in a proton gradient. In Neisseria meningitidis serogroup C (strain 053442), this protein is NADH-quinone oxidoreductase subunit C.